The sequence spans 131 residues: Fluoride-specific ion channel FluC 1 (131 aa).

4 helical membrane passes run 4-24 (ILLI…LSGW), 32-52 (FPLG…LVMY), 66-86 (ILLT…SYES), and 95-115 (LMQL…AVYL). Residues Gly-74 and Thr-77 each coordinate Na(+).

The protein belongs to the fluoride channel Fluc/FEX (TC 1.A.43) family.

It is found in the cell membrane. It catalyses the reaction fluoride(in) = fluoride(out). Its activity is regulated as follows. Na(+) is not transported, but it plays an essential structural role and its presence is essential for fluoride channel function. Its function is as follows. Fluoride-specific ion channel. Important for reducing fluoride concentration in the cell, thus reducing its toxicity. This chain is Fluoride-specific ion channel FluC 1, found in Methanosarcina acetivorans (strain ATCC 35395 / DSM 2834 / JCM 12185 / C2A).